The sequence spans 96 residues: MPKTQTLEQTKLSEPKMYKVILLNDDVTTMDFVIEILMNIFHQNLEKASQTMLEIHHNGSGICGIYTQEIALSKQKKVMDAAKLANFPLQAKVEEE.

The protein belongs to the ClpS family. In terms of assembly, binds to the N-terminal domain of the chaperone ClpA.

Its function is as follows. Involved in the modulation of the specificity of the ClpAP-mediated ATP-dependent protein degradation. This chain is ATP-dependent Clp protease adapter protein ClpS, found in Campylobacter jejuni subsp. jejuni serotype O:2 (strain ATCC 700819 / NCTC 11168).